We begin with the raw amino-acid sequence, 541 residues long: Probable inorganic phosphate transporter 1-8 (541 aa).

At 1-28 (MARQEQQQHLQVLSALDAAKTQWYHFTA) the chain is on the cytoplasmic side. Residues 29 to 49 (IVVAGMGFFTDAYDLFCISLV) traverse the membrane as a helical segment. At 50–74 (TKLLGRIYYTDLAKENPGSLPPNVA) the chain is on the extracellular side. Residues 75-95 (AAVNGVAFCGTLAGQLFFGWL) traverse the membrane as a helical segment. At 96–102 (GDKLGRK) the chain is on the cytoplasmic side. A helical transmembrane segment spans residues 103–123 (SVYGMTLLMMVICSIASGLSF). The Extracellular portion of the chain corresponds to 124–126 (SHT). Residues 127–147 (PTSVMATLCFFRFWLGFGIGG) form a helical membrane-spanning segment. Residues 148–168 (DYPLSATIMSEYANKKTRGAF) are Cytoplasmic-facing. Residues 169–189 (IAAVFAMQGFGILAGGIVTLI) form a helical membrane-spanning segment. Topologically, residues 190–215 (ISSAFRAGFPAPAYQDDRAGSTVRQA) are extracellular. Residues 216–236 (DYVWRIILMLGAMPALLTYYW) traverse the membrane as a helical segment. Topologically, residues 237–297 (RMKMPETARY…GLFSRQFARR (61 aa)) are cytoplasmic. The helical transmembrane segment at 298–318 (HGLHLVGTATTWFLLDIAFYS) threads the bilayer. Topologically, residues 319-353 (QNLFQKDIFTSINWIPKAKTMSALEEVFRIARAQT) are extracellular. Residues 354 to 374 (LIALCGTVPGYWFTVFLIDIV) form a helical membrane-spanning segment. The Cytoplasmic segment spans residues 375–376 (GR). A helical transmembrane segment spans residues 377-397 (FAIQLLGFFMMTVFMLGLAVP). At 398-404 (YHHWTTK) the chain is on the extracellular side. A helical transmembrane segment spans residues 405 to 425 (GNHIGFVVMYAFTFFFANFGP). Residues 426–447 (NSTTFIVPAEIFPARLRSTCHG) are Cytoplasmic-facing. Residues 448–468 (ISAAAGKAGAIIGSFGFLYAA) traverse the membrane as a helical segment. The Extracellular portion of the chain corresponds to 469–486 (QDPHKPDAGYKPGIGVRN). A helical transmembrane segment spans residues 487-507 (SLFVLAGCNLLGFICTFLVPE). At 508–541 (SKGKSLEEMSGEAEDDDDEVAAAGGGAAVRPQTA) the chain is on the cytoplasmic side. Positions 514–541 (EEMSGEAEDDDDEVAAAGGGAAVRPQTA) are disordered. Residues 516 to 527 (MSGEAEDDDDEV) show a composition bias toward acidic residues.

Belongs to the major facilitator superfamily. Phosphate:H(+) symporter (TC 2.A.1.9) family.

Its subcellular location is the membrane. In terms of biological role, high-affinity transporter for external inorganic phosphate. The protein is Probable inorganic phosphate transporter 1-8 (PHT1-8) of Oryza sativa subsp. japonica (Rice).